Here is an 89-residue protein sequence, read N- to C-terminus: Small ribosomal subunit protein uS14 (89 aa).

It belongs to the universal ribosomal protein uS14 family. Part of the 30S ribosomal subunit. Contacts proteins S3 and S10.

Functionally, binds 16S rRNA, required for the assembly of 30S particles and may also be responsible for determining the conformation of the 16S rRNA at the A site. The sequence is that of Small ribosomal subunit protein uS14 from Akkermansia muciniphila (strain ATCC BAA-835 / DSM 22959 / JCM 33894 / BCRC 81048 / CCUG 64013 / CIP 107961 / Muc).